The chain runs to 354 residues: Arginase (354 aa).

Residues His-136, Asp-159, His-161, and Asp-163 each contribute to the Mn(2+) site. Asn-165, Ser-172, and Asp-217 together coordinate L-arginine. Mn(2+)-binding residues include Asp-266 and Asp-268.

Belongs to the arginase family. In terms of assembly, homotrimer; oligomerization is dependent on Mn(2+) binding. Mn(2+) serves as cofactor.

It carries out the reaction L-arginine + H2O = urea + L-ornithine. It functions in the pathway nitrogen metabolism; urea cycle; L-ornithine and urea from L-arginine: step 1/1. In terms of biological role, catalyzes the hydrolysis of L-arginine into urea and L-ornithine, which is a precursor for polyamine biosynthesis. May play a role in parasite intra-hepatic development during the host liver stage. The chain is Arginase from Plasmodium berghei (strain Anka).